Here is a 229-residue protein sequence, read N- to C-terminus: Uracil-DNA glycosylase (229 aa).

Asp64 acts as the Proton acceptor in catalysis.

This sequence belongs to the uracil-DNA glycosylase (UDG) superfamily. UNG family.

It is found in the cytoplasm. The enzyme catalyses Hydrolyzes single-stranded DNA or mismatched double-stranded DNA and polynucleotides, releasing free uracil.. In terms of biological role, excises uracil residues from the DNA which can arise as a result of misincorporation of dUMP residues by DNA polymerase or due to deamination of cytosine. The sequence is that of Uracil-DNA glycosylase from Shigella flexneri serotype 5b (strain 8401).